A 78-amino-acid chain; its full sequence is Large ribosomal subunit protein bL28 (78 aa).

The tract at residues 1 to 20 is disordered; sequence MSRVCQVTSKRPAVGNNRSH.

This sequence belongs to the bacterial ribosomal protein bL28 family.

The chain is Large ribosomal subunit protein bL28 from Haemophilus ducreyi (strain 35000HP / ATCC 700724).